The following is a 434-amino-acid chain: Bifunctional protein GlmU (434 aa).

The segment at 1 to 226 is pyrophosphorylase; sequence MNKNKISIVI…ENEYKGVNSK (226 aa). UDP-N-acetyl-alpha-D-glucosamine-binding positions include 11–14, Lys-25, Gln-77, and 84–85; these read LAAG and GT. Position 105 (Asp-105) interacts with Mg(2+). Gly-138, Glu-152, Asn-167, and Asn-224 together coordinate UDP-N-acetyl-alpha-D-glucosamine. Asn-224 contacts Mg(2+). Positions 227 to 247 are linker; that stretch reads KDLSDAEIIMQDKIKNSLMES. The N-acetyltransferase stretch occupies residues 248 to 434; that stretch reads GVTMQLPSTI…DFYYKFFAKK (187 aa). 2 residues coordinate UDP-N-acetyl-alpha-D-glucosamine: Arg-311 and Lys-328. Residue His-339 is the Proton acceptor of the active site. Positions 342 and 353 each coordinate UDP-N-acetyl-alpha-D-glucosamine. Residues Ala-356, 362-363, Ser-381, and Ala-399 contribute to the acetyl-CoA site; that span reads NY.

It in the N-terminal section; belongs to the N-acetylglucosamine-1-phosphate uridyltransferase family. The protein in the C-terminal section; belongs to the transferase hexapeptide repeat family. In terms of assembly, homotrimer. Mg(2+) is required as a cofactor.

Its subcellular location is the cytoplasm. It catalyses the reaction alpha-D-glucosamine 1-phosphate + acetyl-CoA = N-acetyl-alpha-D-glucosamine 1-phosphate + CoA + H(+). The enzyme catalyses N-acetyl-alpha-D-glucosamine 1-phosphate + UTP + H(+) = UDP-N-acetyl-alpha-D-glucosamine + diphosphate. It participates in nucleotide-sugar biosynthesis; UDP-N-acetyl-alpha-D-glucosamine biosynthesis; N-acetyl-alpha-D-glucosamine 1-phosphate from alpha-D-glucosamine 6-phosphate (route II): step 2/2. The protein operates within nucleotide-sugar biosynthesis; UDP-N-acetyl-alpha-D-glucosamine biosynthesis; UDP-N-acetyl-alpha-D-glucosamine from N-acetyl-alpha-D-glucosamine 1-phosphate: step 1/1. It functions in the pathway bacterial outer membrane biogenesis; LPS lipid A biosynthesis. In terms of biological role, catalyzes the last two sequential reactions in the de novo biosynthetic pathway for UDP-N-acetylglucosamine (UDP-GlcNAc). The C-terminal domain catalyzes the transfer of acetyl group from acetyl coenzyme A to glucosamine-1-phosphate (GlcN-1-P) to produce N-acetylglucosamine-1-phosphate (GlcNAc-1-P), which is converted into UDP-GlcNAc by the transfer of uridine 5-monophosphate (from uridine 5-triphosphate), a reaction catalyzed by the N-terminal domain. The sequence is that of Bifunctional protein GlmU from Sulfurimonas denitrificans (strain ATCC 33889 / DSM 1251) (Thiomicrospira denitrificans (strain ATCC 33889 / DSM 1251)).